The primary structure comprises 447 residues: Omega-6 fatty acid desaturase, chloroplastic (447 aa).

The N-terminal 65 residues, 1-65, are a transit peptide targeting the chloroplast; sequence MESAITISNH…TRRKSTLVQA (65 aa). Val-66 carries the post-translational modification N-acetylvaline. A Histidine box-1 motif is present at residues 171-175; sequence HDCAH. A Histidine box-2 motif is present at residues 207–211; the sequence is HDQHH. The Histidine box-3 motif lies at 367–371; the sequence is HIPHH.

It belongs to the fatty acid desaturase type 1 family.

It localises to the plastid. The protein localises to the chloroplast membrane. The catalysed reaction is a (9Z)-octadecenoyl-containing glycerolipid + 2 reduced [2Fe-2S]-[ferredoxin] + O2 + 2 H(+) = a (9Z,12Z)-octadecadienoyl-containing glycerolipid + 2 oxidized [2Fe-2S]-[ferredoxin] + 2 H2O. It functions in the pathway lipid metabolism; polyunsaturated fatty acid biosynthesis. Chloroplast omega-6 fatty acid desaturase introduces the second double bond in the biosynthesis of 16:3 and 18:3 fatty acids, important constituents of plant membranes. It is thought to use ferredoxin as an electron donor and to act on fatty acids esterified to galactolipids, sulfolipids and phosphatidylglycerol. This chain is Omega-6 fatty acid desaturase, chloroplastic, found in Spinacia oleracea (Spinach).